Consider the following 267-residue polypeptide: Ribosomal RNA small subunit methyltransferase A (267 aa).

6 residues coordinate S-adenosyl-L-methionine: Asn18, Leu20, Gly45, Glu66, Asp91, and Asn112.

Belongs to the class I-like SAM-binding methyltransferase superfamily. rRNA adenine N(6)-methyltransferase family. RsmA subfamily.

The protein localises to the cytoplasm. It catalyses the reaction adenosine(1518)/adenosine(1519) in 16S rRNA + 4 S-adenosyl-L-methionine = N(6)-dimethyladenosine(1518)/N(6)-dimethyladenosine(1519) in 16S rRNA + 4 S-adenosyl-L-homocysteine + 4 H(+). Functionally, specifically dimethylates two adjacent adenosines (A1518 and A1519) in the loop of a conserved hairpin near the 3'-end of 16S rRNA in the 30S particle. May play a critical role in biogenesis of 30S subunits. The sequence is that of Ribosomal RNA small subunit methyltransferase A from Shewanella pealeana (strain ATCC 700345 / ANG-SQ1).